Consider the following 581-residue polypeptide: Arginine--tRNA ligase (581 aa).

The short motif at 126–136 (PNLAKEMHVGH) is the 'HIGH' region element.

Belongs to the class-I aminoacyl-tRNA synthetase family. In terms of assembly, monomer.

The protein localises to the cytoplasm. It carries out the reaction tRNA(Arg) + L-arginine + ATP = L-arginyl-tRNA(Arg) + AMP + diphosphate. In Shewanella sediminis (strain HAW-EB3), this protein is Arginine--tRNA ligase.